A 210-amino-acid chain; its full sequence is Ribosomal RNA large subunit methyltransferase E (210 aa).

S-adenosyl-L-methionine-binding residues include G61, W63, D81, D97, and D122. The active-site Proton acceptor is K162. The segment covering 187-196 (KPEASRKRSP) has biased composition (basic and acidic residues). Positions 187-210 (KPEASRKRSPEVYALGQGKRAHMK) are disordered.

Belongs to the class I-like SAM-binding methyltransferase superfamily. RNA methyltransferase RlmE family.

It is found in the cytoplasm. It carries out the reaction uridine(2552) in 23S rRNA + S-adenosyl-L-methionine = 2'-O-methyluridine(2552) in 23S rRNA + S-adenosyl-L-homocysteine + H(+). In terms of biological role, specifically methylates the uridine in position 2552 of 23S rRNA at the 2'-O position of the ribose in the fully assembled 50S ribosomal subunit. This Stenotrophomonas maltophilia (strain K279a) protein is Ribosomal RNA large subunit methyltransferase E.